The primary structure comprises 149 residues: 3-hydroxyacyl-[acyl-carrier-protein] dehydratase FabZ (149 aa).

His-53 is an active-site residue.

Belongs to the thioester dehydratase family. FabZ subfamily.

The protein resides in the cytoplasm. The catalysed reaction is a (3R)-hydroxyacyl-[ACP] = a (2E)-enoyl-[ACP] + H2O. Involved in unsaturated fatty acids biosynthesis. Catalyzes the dehydration of short chain beta-hydroxyacyl-ACPs and long chain saturated and unsaturated beta-hydroxyacyl-ACPs. The sequence is that of 3-hydroxyacyl-[acyl-carrier-protein] dehydratase FabZ from Neisseria meningitidis serogroup B (strain ATCC BAA-335 / MC58).